Consider the following 709-residue polypeptide: Elongation factor G (709 aa).

The region spanning 10 to 295 is the tr-type G domain; that stretch reads NQIRNIGIMA…AVVDYLPSPE (286 aa). Residues 19 to 26, 91 to 95, and 145 to 148 contribute to the GTP site; these read AHIDAGKT, DTPGH, and NKMD.

Belongs to the TRAFAC class translation factor GTPase superfamily. Classic translation factor GTPase family. EF-G/EF-2 subfamily.

It localises to the cytoplasm. Its function is as follows. Catalyzes the GTP-dependent ribosomal translocation step during translation elongation. During this step, the ribosome changes from the pre-translocational (PRE) to the post-translocational (POST) state as the newly formed A-site-bound peptidyl-tRNA and P-site-bound deacylated tRNA move to the P and E sites, respectively. Catalyzes the coordinated movement of the two tRNA molecules, the mRNA and conformational changes in the ribosome. The polypeptide is Elongation factor G (Bifidobacterium adolescentis (strain ATCC 15703 / DSM 20083 / NCTC 11814 / E194a)).